The chain runs to 157 residues: Secreted effector protein See1 (157 aa).

Positions 1-21 (MLFTTFVSLLLVILCLVHVSA) are cleaved as a signal peptide. A disordered region spans residues 124–157 (SYRYGDSHGNSREAEYSVADHQSASGEYKFGPTT). Residues 128–138 (GDSHGNSREAE) show a composition bias toward basic and acidic residues.

As to quaternary structure, interacts with a maize homolog of SGT1, a factor acting in cell cycle progression in yeast Saccharomyces cerevisiae and an important component of plant and human innate immunity.

It localises to the secreted. It is found in the host cytoplasm. Its subcellular location is the host nucleus. Functionally, effector protein involved in the induction of tumors in infected plant tissues by the fungus. Required for the reactivation of plant DNA synthesis, which is crucial for tumor progression in leaf cells. Interferes with the MAPK-triggered phosphorylation of maize SGT1 at a monocot-specific phosphorylation site, resulting in both modulation of immune responses and reactivation of DNA synthesis during leaf tumor formation. The protein is Secreted effector protein See1 of Mycosarcoma maydis (Corn smut fungus).